Reading from the N-terminus, the 416-residue chain is Lactose permease (416 aa).

Over 1–13 the chain is Cytoplasmic; the sequence is MKLSELAPRERHN. The chain crosses the membrane as a helical span at residues 14 to 34; sequence FIYFMLFFFFYYFIMSAYFPF. The Periplasmic segment spans residues 35–50; sequence FPVWLAEVNHLTKTET. The helical transmembrane segment at 51–71 threads the bilayer; the sequence is GIVFSCISLFAIIFQPVFGLI. The Cytoplasmic portion of the chain corresponds to 72–80; that stretch reads SDKLGLRKH. The helical transmembrane segment at 81-101 threads the bilayer; sequence LLWTITILLILFAPFFIFVFS. Pro-102 is a topological domain (periplasmic). The chain crosses the membrane as a helical span at residues 103 to 123; the sequence is LLQMNIMAGALVGGVYLGIVF. The Cytoplasmic segment spans residues 124 to 149; it reads SSRSGAVEAYIERVSRANRFEYGKVR. 2 helical membrane-spanning segments follow: residues 150–170 and 171–191; these read VSGCVGWALCASITGILFSID and PNITFWIASGFALILGVLLWV. At 192 to 223 the chain is on the cytoplasmic side; sequence SKPESSNSAEVIDALGANRQAFSMRTAAELFR. The chain crosses the membrane as a helical span at residues 224-244; sequence MPRFWGFIIYVVGVASVYDVF. The Periplasmic segment spans residues 245–267; that stretch reads DQQFANFFKGFFSSPQRGTEVFG. A helical transmembrane segment spans residues 268–288; that stretch reads FVTTGGELLNALIMFCAPAII. The Cytoplasmic portion of the chain corresponds to 289–295; it reads NRIGAKN. 2 helical membrane passes run 296-316 and 317-337; these read ALLIAGLIMSVRILGSSFATS and AVEVIILKMLHMFEIPFLLVG. The Cytoplasmic portion of the chain corresponds to 338-353; it reads TFKYISSAFKGKLSAT. The helical transmembrane segment at 354 to 374 threads the bilayer; the sequence is LFLIGFNLSKQLSSVVLSAWV. Topologically, residues 375–384 are periplasmic; that stretch reads GRMYDTVGFH. Residues 385 to 405 traverse the membrane as a helical segment; it reads QAYLILGCITLSFTVISLFTL. Residues 406–416 are Cytoplasmic-facing; that stretch reads KGSKTLLPATA.

This sequence belongs to the major facilitator superfamily. Oligosaccharide:H(+) symporter (OHS) (TC 2.A.1.5) family.

The protein localises to the cell inner membrane. The catalysed reaction is lactose(in) + H(+)(in) = lactose(out) + H(+)(out). Its function is as follows. Responsible for transport of beta-galactosides into the cell, with the concomitant import of a proton (symport system). The polypeptide is Lactose permease (lacY) (Klebsiella oxytoca).